The following is a 487-amino-acid chain: MTDFFNENLTSLHKKLVDKEISATELTKEALNKSKSSQSEINAFITIDDEGALKRAAEIDAVGIDPDNILSGIPFAIKDNIVTKGLKTTAASHILDNFVPVYDATVIEKLNELGIVTIGKTNMDEFAMGGSTETSYFGKTANAWDHTKVPGGSSGGSASSVASGVIPVALGSDTGGSIRQPAAFNGIVGLKPTYGRVSRWGLIAFGSSLDQIGPLTRTVEDNARVLAAISGKDQRDTTTEDQSVPDFTKGIKKGVKDLRIGVPKEYFAKGIDEGVKDVVKKAIAKYESLGAKVDEVSLPHSKYGIAAYYILASSEASSNLERFDGIRYGFSARQDGQTLEDLYVRTRSEGFGDEVKRRIMLGTFALSAGFYDAYFKKAAQVRTLIVNDFAKVFENHDIILGPTTTSPAFDLGSENDDPVKMYMNDLLTIPLNLAGLPGMSINAGFTDGLPVGLQIIGKRFDESTIYKTAYAFEQDSQLFTKHPGVNF.

Catalysis depends on charge relay system residues Lys78 and Ser153. The active-site Acyl-ester intermediate is Ser177.

The protein belongs to the amidase family. GatA subfamily. As to quaternary structure, heterotrimer of A, B and C subunits.

The catalysed reaction is L-glutamyl-tRNA(Gln) + L-glutamine + ATP + H2O = L-glutaminyl-tRNA(Gln) + L-glutamate + ADP + phosphate + H(+). Functionally, allows the formation of correctly charged Gln-tRNA(Gln) through the transamidation of misacylated Glu-tRNA(Gln) in organisms which lack glutaminyl-tRNA synthetase. The reaction takes place in the presence of glutamine and ATP through an activated gamma-phospho-Glu-tRNA(Gln). In Oenococcus oeni (strain ATCC BAA-331 / PSU-1), this protein is Glutamyl-tRNA(Gln) amidotransferase subunit A.